Here is a 307-residue protein sequence, read N- to C-terminus: HPr kinase/phosphorylase (307 aa).

Residues H136 and K157 contribute to the active site. ATP is bound at residue 151–158 (GESGIGKS). Residue S158 participates in Mg(2+) binding. The active-site Proton acceptor; for phosphorylation activity. Proton donor; for dephosphorylation activity is D175. The interval 198 to 207 (LEVRGMGIID) is important for the catalytic mechanism of both phosphorylation and dephosphorylation. E199 serves as a coordination point for Mg(2+). R240 is a catalytic residue. The important for the catalytic mechanism of dephosphorylation stretch occupies residues 261 to 266 (PIRPGR).

Belongs to the HPrK/P family. In terms of assembly, homohexamer. Mg(2+) serves as cofactor.

It catalyses the reaction [HPr protein]-L-serine + ATP = [HPr protein]-O-phospho-L-serine + ADP + H(+). It carries out the reaction [HPr protein]-O-phospho-L-serine + phosphate + H(+) = [HPr protein]-L-serine + diphosphate. Catalyzes the ATP- as well as the pyrophosphate-dependent phosphorylation of a specific serine residue in HPr, a phosphocarrier protein of the phosphoenolpyruvate-dependent sugar phosphotransferase system (PTS). HprK/P also catalyzes the pyrophosphate-producing, inorganic phosphate-dependent dephosphorylation (phosphorolysis) of seryl-phosphorylated HPr (P-Ser-HPr). The two antagonistic activities of HprK/P are regulated by several intracellular metabolites, which change their concentration in response to the absence or presence of rapidly metabolisable carbon sources (glucose, fructose, etc.) in the growth medium. Therefore, by controlling the phosphorylation state of HPr, HPrK/P is a sensor enzyme that plays a major role in the regulation of carbon metabolism and sugar transport: it mediates carbon catabolite repression (CCR), and regulates PTS-catalyzed carbohydrate uptake and inducer exclusion. The protein is HPr kinase/phosphorylase of Clostridium perfringens (strain ATCC 13124 / DSM 756 / JCM 1290 / NCIMB 6125 / NCTC 8237 / Type A).